Here is a 130-residue protein sequence, read N- to C-terminus: Small ribosomal subunit protein uS9 (130 aa).

It belongs to the universal ribosomal protein uS9 family.

This chain is Small ribosomal subunit protein uS9, found in Pectobacterium carotovorum subsp. carotovorum (strain PC1).